The primary structure comprises 251 residues: UPF0309 protein SAV_3856 (251 aa).

An SIS domain is found at isoleucine 36–glutamate 220.

This sequence belongs to the UPF0309 family.

This is UPF0309 protein SAV_3856 from Streptomyces avermitilis (strain ATCC 31267 / DSM 46492 / JCM 5070 / NBRC 14893 / NCIMB 12804 / NRRL 8165 / MA-4680).